The chain runs to 216 residues: Transmembrane emp24 domain-containing protein eca (216 aa).

The first 20 residues, 1 to 20 (MRDQFICLALLLCALHSACG), serve as a signal peptide directing secretion. Residues 21-182 (LYFHISETER…FRHTSESTNS (162 aa)) are Lumenal-facing. In terms of domain architecture, GOLD spans 30–126 (RKCFIEEVPD…QLRVHLDIQV (97 aa)). Residues 134 to 164 (ANVAQKEKLTELQLRIRQLLDQVEQITKEQN) adopt a coiled-coil conformation. A helical transmembrane segment spans residues 183-203 (RVLWWSLAQTLVLVCMGFWQM). Residues 204–216 (RHLKSFFEAKKLV) lie on the Cytoplasmic side of the membrane. A Prevents secretion from ER motif is present at residues 213–216 (KKLV).

Belongs to the EMP24/GP25L family.

It localises to the endoplasmic reticulum membrane. In terms of biological role, eca and bai are essential, though not redundant, for dorsoventral patterning of the embryo. Specifically required during early embryogenesis for the activity of maternal tkv, while the zygotic tkv is not affected. Involved in Golgi organization. In Drosophila pseudoobscura pseudoobscura (Fruit fly), this protein is Transmembrane emp24 domain-containing protein eca.